Here is a 343-residue protein sequence, read N- to C-terminus: L-threonine 3-dehydrogenase (343 aa).

Cys-40 provides a ligand contact to Zn(2+). Catalysis depends on charge relay system residues Thr-42 and His-45. Residues His-65, Glu-66, Cys-95, Cys-98, Cys-101, and Cys-109 each coordinate Zn(2+). NAD(+) is bound by residues Ile-177, Asp-197, Arg-202, 264 to 266, and 288 to 289; these read LGI and IY.

It belongs to the zinc-containing alcohol dehydrogenase family. As to quaternary structure, homotetramer. The cofactor is Zn(2+).

The protein resides in the cytoplasm. It carries out the reaction L-threonine + NAD(+) = (2S)-2-amino-3-oxobutanoate + NADH + H(+). Its pathway is amino-acid degradation; L-threonine degradation via oxydo-reductase pathway; glycine from L-threonine: step 1/2. Its function is as follows. Catalyzes the NAD(+)-dependent oxidation of L-threonine to 2-amino-3-ketobutyrate. The polypeptide is L-threonine 3-dehydrogenase (Vibrio parahaemolyticus serotype O3:K6 (strain RIMD 2210633)).